Here is a 420-residue protein sequence, read N- to C-terminus: Tyrosine--tRNA ligase (420 aa).

L-tyrosine is bound at residue Tyr33. The 'HIGH' region signature appears at 38-47 (PTADSLHIGH). L-tyrosine contacts are provided by Tyr168 and Gln172. The 'KMSKS' region signature appears at 231–235 (KFGKT). ATP is bound at residue Lys234. Residues 353–419 (MLLVDALIKV…GKKNYYLVKL (67 aa)) enclose the S4 RNA-binding domain.

The protein belongs to the class-I aminoacyl-tRNA synthetase family. TyrS type 1 subfamily. As to quaternary structure, homodimer.

It is found in the cytoplasm. It carries out the reaction tRNA(Tyr) + L-tyrosine + ATP = L-tyrosyl-tRNA(Tyr) + AMP + diphosphate + H(+). Functionally, catalyzes the attachment of tyrosine to tRNA(Tyr) in a two-step reaction: tyrosine is first activated by ATP to form Tyr-AMP and then transferred to the acceptor end of tRNA(Tyr). The protein is Tyrosine--tRNA ligase of Desulfitobacterium hafniense (strain DSM 10664 / DCB-2).